Consider the following 185-residue polypeptide: MPAYDKADLERRMHGAVEALKSDLTGLRTGRASVNLLDPVTVEIYGAHMPLNQAATVTAPEPRMLSVQVWDRSNVGPVDKAIRSAGLGLNPIVDGQTLRIPIPDLTEERRKELAKLASQYAEKARVAVRNVRRDGMDSLKTDEKKGEIGEDDRKRRETEVQKLTDATISDVDAAAAAKEKEILGK.

The interval 136-161 (MDSLKTDEKKGEIGEDDRKRRETEVQ) is disordered.

This sequence belongs to the RRF family.

The protein resides in the cytoplasm. Functionally, responsible for the release of ribosomes from messenger RNA at the termination of protein biosynthesis. May increase the efficiency of translation by recycling ribosomes from one round of translation to another. The sequence is that of Ribosome-recycling factor from Rhizorhabdus wittichii (strain DSM 6014 / CCUG 31198 / JCM 15750 / NBRC 105917 / EY 4224 / RW1) (Sphingomonas wittichii).